Consider the following 268-residue polypeptide: Ribosomal RNA small subunit methyltransferase A (268 aa).

6 residues coordinate S-adenosyl-L-methionine: Asn18, Leu20, Gly45, Glu66, Asp91, and Asn112.

Belongs to the class I-like SAM-binding methyltransferase superfamily. rRNA adenine N(6)-methyltransferase family. RsmA subfamily.

The protein resides in the cytoplasm. It carries out the reaction adenosine(1518)/adenosine(1519) in 16S rRNA + 4 S-adenosyl-L-methionine = N(6)-dimethyladenosine(1518)/N(6)-dimethyladenosine(1519) in 16S rRNA + 4 S-adenosyl-L-homocysteine + 4 H(+). In terms of biological role, specifically dimethylates two adjacent adenosines (A1518 and A1519) in the loop of a conserved hairpin near the 3'-end of 16S rRNA in the 30S particle. May play a critical role in biogenesis of 30S subunits. The chain is Ribosomal RNA small subunit methyltransferase A from Shewanella baltica (strain OS223).